A 32-amino-acid polypeptide reads, in one-letter code: Delta-conotoxin-like MVID (32 aa).

3 cysteine pairs are disulfide-bonded: Cys3–Cys18, Cys10–Cys22, and Cys17–Cys27. Pro14 bears the 4-hydroxyproline mark.

It belongs to the conotoxin O1 superfamily. In terms of tissue distribution, expressed by the venom duct.

The protein resides in the secreted. Delta-conotoxins bind to site 6 of voltage-gated sodium channels (Nav) and inhibit the inactivation process. This Conus magus (Magical cone) protein is Delta-conotoxin-like MVID.